We begin with the raw amino-acid sequence, 324 residues long: MHRTTRIKITELNPHLMCVLCGGYFIDATTIVECLHSFCKMCIVRYLETSKYCPICDVQVHKTKPLLNIRSDKTLQDIVYKLVPGLFKNEMKRRRDFYAEHPVDATNGSNEDRGEVSDEDKRIIADDEIISLSIEFFDQKKLDGKDGEEKESTKEVTVKRYLQCPAAMTVMHLRKFLRSKMDIPCTFQIEVMYEDEPLKDYYTLMDIAYIYTWRRNGPLPLKYRVRPGCKKIKLSSPRNDMSGGRRPDTESDSSSDKPNSPSIVAAPSTSSSMPSPNTPVQSTHPSFPHISTINGVSAKVGHNGQTPFSSKVCKTSHNGSNSLG.

The segment at 18–57 (CVLCGGYFIDATTIVECLHSFCKMCIVRYLETSKYCPICD) adopts an RING-type zinc-finger fold. The Nuclear localization signal motif lies at 81–95 (KLVPGLFKNEMKRRR). Residues 232 to 324 (IKLSSPRNDM…TSHNGSNSLG (93 aa)) are disordered. A compositionally biased stretch (low complexity) spans 256 to 279 (DKPNSPSIVAAPSTSSSMPSPNTP). Composition is skewed to polar residues over residues 280–295 (VQSTHPSFPHISTING) and 303–324 (NGQTPFSSKVCKTSHNGSNSLG).

As to quaternary structure, component of a PRC1-like complex. Homodimer. Interacts with cbx2.

Its subcellular location is the nucleus. Its function is as follows. Component of a Polycomb group (PcG) multiprotein PRC1-like complex, a complex class required to maintain the transcriptionally repressive state of many genes, including Hox genes, throughout development. PcG PRC1 complex acts via chromatin remodeling and modification of histones; it mediates monoubiquitination of histone H2A 'Lys-119', rendering chromatin heritably changed in its expressibility. In the PRC1 complex, it is required to stimulate the E3 ubiquitin-protein ligase activity of rnf2. This is Polycomb complex protein BMI-1-B (bmi1b) from Danio rerio (Zebrafish).